We begin with the raw amino-acid sequence, 92 residues long: Acylphosphatase (92 aa).

A disulfide bond links Cys-5 and Cys-49. The Acylphosphatase-like domain maps to 5-92; it reads CIIAWIYGRV…SGELTDFRIR (88 aa). Active-site residues include Arg-20 and Asn-38.

The protein belongs to the acylphosphatase family.

It carries out the reaction an acyl phosphate + H2O = a carboxylate + phosphate + H(+). The polypeptide is Acylphosphatase (Shigella boydii serotype 4 (strain Sb227)).